The sequence spans 655 residues: p-hydroxybenzoic acid efflux pump subunit AaeB (655 aa).

11 consecutive transmembrane segments (helical) span residues 13–33 (FAVK…HFQL), 38–58 (WAVL…GGEP), 69–89 (LRII…IAMI), 93–113 (LLMI…SSLV), 121–141 (WGLA…EPLL), 152–172 (EIVI…PRSI), 370–390 (LFWL…IAVV), 407–427 (FIYG…VIIP), 431–451 (QSML…GIEV), 455–475 (LLGS…DNPM), and 482–502 (FLDS…VILL).

Belongs to the aromatic acid exporter ArAE (TC 2.A.85) family.

It is found in the cell inner membrane. In terms of biological role, forms an efflux pump with AaeA. Could function as a metabolic relief valve, allowing to eliminate certain compounds when they accumulate to high levels in the cell. The chain is p-hydroxybenzoic acid efflux pump subunit AaeB from Shigella boydii serotype 4 (strain Sb227).